Consider the following 370-residue polypeptide: Putative L-lysine 2,3-aminomutase aq_454 (370 aa).

A Radical SAM core domain is found at 107-322; that stretch reads HRYPDRVLLN…RGRLSGFGIP (216 aa). [4Fe-4S] cluster-binding residues include Cys121, Cys125, and Cys128. Residue Lys334 is modified to N6-(pyridoxal phosphate)lysine.

The protein belongs to the radical SAM superfamily. KamA family. It depends on [4Fe-4S] cluster as a cofactor. Pyridoxal 5'-phosphate is required as a cofactor.

The protein is Putative L-lysine 2,3-aminomutase aq_454 of Aquifex aeolicus (strain VF5).